Consider the following 127-residue polypeptide: MSSDPHMLGIQGEQIAAAYLSRHGYRIIQRNYRYRRNEIDIIAKKHATICFIEVKTRASLEKGHPSEAVTPKKQKEIIKAAKSYLFSLGTDRCECRFDVIAILVRSMKQEEIGLYDLDHFTDAFQAE.

Belongs to the UPF0102 family.

The sequence is that of UPF0102 protein Cpha266_0037 from Chlorobium phaeobacteroides (strain DSM 266 / SMG 266 / 2430).